The following is a 104-amino-acid chain: Ig lambda-2 chain C region (104 aa).

Residues 6–99 form the Ig-like domain; sequence PTLTVFPPSS…EGDTVEKSLS (94 aa). Cys-27 and Cys-85 form a disulfide bridge.

The protein is Ig lambda-2 chain C region (Iglc2) of Mus musculus (Mouse).